Consider the following 61-residue polypeptide: Sec-independent protein translocase protein TatA (61 aa).

A helical transmembrane segment spans residues 2 to 22 (GLSGISPLSLLLILAIIVALF).

It belongs to the TatA/E family. As to quaternary structure, the Tat system comprises two distinct complexes: a TatABC complex, containing multiple copies of TatA, TatB and TatC subunits, and a separate TatA complex, containing only TatA subunits. Substrates initially bind to the TatABC complex, which probably triggers association of the separate TatA complex to form the active translocon.

It localises to the cell inner membrane. Part of the twin-arginine translocation (Tat) system that transports large folded proteins containing a characteristic twin-arginine motif in their signal peptide across membranes. TatA could form the protein-conducting channel of the Tat system. The chain is Sec-independent protein translocase protein TatA from Legionella pneumophila (strain Corby).